The primary structure comprises 199 residues: dITP/XTP pyrophosphatase (199 aa).

Position 8 to 13 (8 to 13 (SGNAGK)) interacts with substrate. Asp-69 (proton acceptor) is an active-site residue. Asp-69 lines the Mg(2+) pocket. Substrate-binding positions include Ser-70, 154–157 (FGYN), Lys-177, and 182–183 (HR).

It belongs to the HAM1 NTPase family. In terms of assembly, homodimer. The cofactor is Mg(2+).

The enzyme catalyses XTP + H2O = XMP + diphosphate + H(+). It catalyses the reaction dITP + H2O = dIMP + diphosphate + H(+). The catalysed reaction is ITP + H2O = IMP + diphosphate + H(+). In terms of biological role, pyrophosphatase that catalyzes the hydrolysis of nucleoside triphosphates to their monophosphate derivatives, with a high preference for the non-canonical purine nucleotides XTP (xanthosine triphosphate), dITP (deoxyinosine triphosphate) and ITP. Seems to function as a house-cleaning enzyme that removes non-canonical purine nucleotides from the nucleotide pool, thus preventing their incorporation into DNA/RNA and avoiding chromosomal lesions. The polypeptide is dITP/XTP pyrophosphatase (Xanthomonas campestris pv. campestris (strain 8004)).